A 672-amino-acid chain; its full sequence is Glycerophosphocholine phosphodiesterase GPCPD1 (672 aa).

Residues 1-115 form the CBM20 domain; the sequence is MTPSQVAFEI…IIIDDGQFGI (115 aa). Residues K70 and 88–89 contribute to the substrate site; that span reads HK. S175 and S424 each carry phosphoserine. The 301-residue stretch at 318 to 618 folds into the GP-PDE domain; sequence PLDVGHRGAG…DRIYDWMPEQ (301 aa). Phosphotyrosine is present on Y608.

This sequence belongs to the glycerophosphoryl diester phosphodiesterase family. As to expression, widely expressed, with highest expression in spinal chord.

The protein localises to the cytoplasm. It localises to the cytosol. It catalyses the reaction sn-glycerol 3-phosphocholine + H2O = sn-glycerol 3-phosphate + choline + H(+). May be involved in the negative regulation of skeletal muscle differentiation, independently of its glycerophosphocholine phosphodiesterase activity. The sequence is that of Glycerophosphocholine phosphodiesterase GPCPD1 (GPCPD1) from Homo sapiens (Human).